The chain runs to 400 residues: Enoyl-[acyl-carrier-protein] reductase [NADH] (400 aa).

Residues 48-53, 74-75, 111-112, and 139-140 each bind NAD(+); these read GASTGY, FE, DA, and LA. Y225 contributes to the substrate binding site. Y235 serves as the catalytic Proton donor. Residues K244 and 273–275 each bind NAD(+); that span reads VVT.

This sequence belongs to the TER reductase family. In terms of assembly, monomer.

The enzyme catalyses a 2,3-saturated acyl-[ACP] + NAD(+) = a (2E)-enoyl-[ACP] + NADH + H(+). It functions in the pathway lipid metabolism; fatty acid biosynthesis. In terms of biological role, involved in the final reduction of the elongation cycle of fatty acid synthesis (FAS II). Catalyzes the reduction of a carbon-carbon double bond in an enoyl moiety that is covalently linked to an acyl carrier protein (ACP). The sequence is that of Enoyl-[acyl-carrier-protein] reductase [NADH] from Burkholderia ambifaria (strain ATCC BAA-244 / DSM 16087 / CCUG 44356 / LMG 19182 / AMMD) (Burkholderia cepacia (strain AMMD)).